The following is a 658-amino-acid chain: Serine/threonine-protein kinase shk1/pak1 (658 aa).

4 disordered regions span residues 1–21, 39–104, 126–147, and 213–365; these read MERG…ITPI, RKLK…SYDE, GGSS…STVI, and GAKP…QQSN. Polar residues predominate over residues 66-98; sequence PLSQSRTTVSRVSLGSRQHSSSSIRKLQTNVSD. Positions 129–140 are enriched in low complexity; the sequence is SPTSSYGSGSAS. A CRIB domain is found at 147 to 160; that stretch reads ISSPFDPKHVTHVG. Low complexity-rich tracts occupy residues 226-254 and 262-272; these read PLLS…LYPS and ASSSSSPLLSS. A compositionally biased stretch (polar residues) spans 273 to 300; sequence QTVKTTTSNASRQPSPLVSSKSTDNIIR. Residues serine 301 and serine 303 each carry the phosphoserine modification. The Protein kinase domain maps to 386 to 637; the sequence is YRNFVKIGQG…SGELLRHPFL (252 aa). ATP-binding positions include 392–400 and lysine 415; that span reads IGQGASGDV. The active-site Proton acceptor is aspartate 505.

This sequence belongs to the protein kinase superfamily. STE Ser/Thr protein kinase family. STE20 subfamily. In terms of assembly, forms an activated complex with GTP-bound ras-like cdc42. Interacts with skb1 and the SH3 domain of skb5 via its amino-terminal regulatory domain. Skb1, cdc42 and shk1 are able to form a ternary complex in vivo. Interacts with rga8 and may interact with byr2. In terms of processing, autophosphorylated on serine residues.

Its subcellular location is the cytoplasm. The protein localises to the cytoskeleton. It is found in the spindle. The enzyme catalyses L-seryl-[protein] + ATP = O-phospho-L-seryl-[protein] + ADP + H(+). The catalysed reaction is L-threonyl-[protein] + ATP = O-phospho-L-threonyl-[protein] + ADP + H(+). Functionally, MAP4K component of the MAPK pathway required for the mating pheromone response. Phosphorylates histone H2B to form H2BS10ph. Phosphorylates tea1. Required for skb1-dependent mitotic inhibitory function. Regulates microtubule dynamics and cell polarity. This is Serine/threonine-protein kinase shk1/pak1 (shk1) from Schizosaccharomyces pombe (strain 972 / ATCC 24843) (Fission yeast).